The chain runs to 212 residues: Large ribosomal subunit protein uL3 (212 aa).

Residues 130 to 158 (KRGSMTHGSKNHRLPGSTGAGTTPGRVYP) form a disordered region.

This sequence belongs to the universal ribosomal protein uL3 family. Part of the 50S ribosomal subunit. Forms a cluster with proteins L14 and L19.

Its function is as follows. One of the primary rRNA binding proteins, it binds directly near the 3'-end of the 23S rRNA, where it nucleates assembly of the 50S subunit. This Gloeothece citriformis (strain PCC 7424) (Cyanothece sp. (strain PCC 7424)) protein is Large ribosomal subunit protein uL3.